The primary structure comprises 1915 residues: MILKSFLLGNLLSLCMKIINSVVVVGLYYGFLTTFSIGPSYLFLLRARVMEEGTEKEVSATTGFITGQLMMFISIYYAPLHLALGRPHTITVLVLPYLLFHFFWHNHKYFLNINYGSTIRNSIRNLNIQCVFLNNLIFPLFNHFILPSSTLARLINIYMFQCNNKMLFVTSSFVGWLIGHILFMKWVELVLIWIRQNHFFRSNALFIRSNVLIVPKKNLVPELRNSMARIFSILLFITCIYYLGRMPSTLVTKKMKETSKMKQMGQSEEETDVEIETTSETKETKEEQEGSTEEDPSPSLYSEEKEDPDKIDETEEIRVNGNEKSKDEFHFRFKKTCYKYKNSPVFQNFYLDGNQENSKLEILKYEKKNLFWFQKPLVTLLFDYKRWNRPLRYIKNNQLENAVRNEMSQYFFYTCQSDGKQRISFTYPPSLSTFWEMIQRKMSLYTTEKLSPEELYNHWVYTNEQKRNNVSKEFINRIEALDKGSLTLDVLEKRTRLCNDKTEQQCLPKVYDPFLNGPYRGTIKKVSSSSIMNDYLITSIENSIEKLWINKIHGILPTDYREFEQKEKIDTFDGKSLSTDIFHFLTPISKFAGESTTSLNWKGLPLLAEQERNYSKDQAKYLKFLFAAVTTDPNNQIIRNKSIVINEICKKVPRWSYKLIDDLEQQEGEYEEESAEDHQIRSRKAKRVVIFTDNEPDTNTHTNTNNTSDRDEVEEVALIRYSQQPDFRRDIIKGSMRAQRRKIVIWELFQANVHSPLFLDKIDKTFFFSFDISEMTKFIFRNCMGKNTKLKTSDPEEKEKKEKKEENERIAVAETWDSILFAQPIRGSMLVTQSILRKYIVLPLLIIAKNTARILLFQFPEWFEDWEEWNREIHVKCTYNGVPLSETEFPRNWLKDGIQIKILFPLCLKPWHRFKLRSHHRGPMKKKGKKYNFCFLTVWGMETELPFGSPRNQPSFFEPILKELEKKIRKVKNQFFRILRVVKERTKWFLTVLKEKKRWVIEIILFIKRIMKELAKINPILLFGLKEVYESSENKNRKNSQNSITIISNQIIHESPIRIRSTDWTNYYYSLTEKKMKNLADRTSTIRNQIERITKDKKKIFLTPEINISPKKMSCGDKRSESLKSFWEIVKKRSIRLIRKWHFFLKFVIEKIYLLCIINIPRINAQLFLESTKKILDKYIYNYNDETNQEEIDEINQKKIHFISTIKKSLFHISNNNSQIFCDLSSLSQAYVFYKLSQTKVINKYHLRSVLEYHERSLFLKDRIKDYFRTQGIFHFESRHKKLRNSGMNDWKNWLKGHYQYQYDLSQTRWARLVPQKWQNRVNQRRTTQNKDSKKLGSYEKDQLIHYQKQNDYAVELLSNKKEKLKKHYGYDLLSHKYINYENKKDLYIYRSPLQVNEGREITYNYTTHKLESFCVLGGIPIRDYLGEDYIIETDKNPDRKYFDWGILHFCLRKEVDIDTWTNMDTEASINKKTKTGTNYSQIVEKINKKDLFMIHEEINPSNQKKKPFDWMGMNEEILNRTISNLELWFVPEFLLLYDTYKMKPWGIPIKLLLVNLNGNENVSENKNINRKQKKNLPLSSNKNKKKSLELENRNQEEKESSSQGDLGSNAQNQGNLGPNAQNQGNLGSVLPNQQKNLEEDYAGSDIKKVRKKKQFKSKAEVELDLLLKKYLLFQLRWNGSLNQRILNNIKIYCFLLRLINPKEITISSIQKGEMSLGIMLIKRDLTFTELIKRGIFIIEPVRLSIKWDGQFIMYQTIGISLVHKSKHQTNQRYREKRCIDKNHFEGFIARHENMLGNGDENHYDLLVPENISSPRRRRELRILTCFHFLNGNVLDRNPVFCNGNNVKNCGQFLNEDKHLDRDTNKLINMKLKFFLWPNYRLEDLACMNRYWFDTNNGSRFSMSRIHMYPRLKIS.

The next 6 helical transmembrane spans lie at Ile18 to Gly38, Phe64 to Leu84, Ile90 to Phe110, Leu126 to Leu146, Val174 to Ile194, and Ile230 to Leu250. Disordered stretches follow at residues Lys260–Val319 and Asn1566–Leu1631. Residues Ser267–Thr277 show a composition bias toward acidic residues. Positions Ser279 to Gln288 are enriched in basic and acidic residues. The span at Glu304–Glu315 shows a compositional bias: acidic residues. Positions Lys1587–Ser1601 are enriched in basic and acidic residues. A compositionally biased stretch (polar residues) spans Ser1602 to Leu1631.

This sequence belongs to the TIC214 family. As to quaternary structure, part of the Tic complex.

The protein localises to the plastid. It is found in the chloroplast inner membrane. Functionally, involved in protein precursor import into chloroplasts. May be part of an intermediate translocation complex acting as a protein-conducting channel at the inner envelope. The chain is Protein TIC 214 from Platanus occidentalis (Sycamore).